Consider the following 1266-residue polypeptide: MEDFIVISDDSGSESSAGTRSGRARRLRRALSRTPGALPRRTVDFIDLTRETRTRAKDRNGLCVIDLTRSEEENRPIATLDLTLEPVASSQKEPPSLQTCTNLSGKEMIEAQGDRGTQPAAQRVINNDPVDLDLLEENMFEGSRPPTSISQDSVYPPEPNCSSITYKGDLSFLTSLQLSSDVSPFSSTSNNSSSSSNQRTSLPCPQQDVPCQSQGLLCSLQALSYPLRGSPCPPRASSCPPQALSCPPQALSSLSCPSQTVQCQLQALPQPPQEVPCSTQNVPCPQQNIPSTPQDLPWHPRHPLYPSQDTLGLPQDVPGRPQNVSYPQDMTQLQDMPWSLQDMPLSLQDVLQSLQDVPPLLGDVPQSPEVMQLPGYMTQSSRNVIQSSAGVIRSSGGVMQPSGCMMQPSGGVTQSLRSAIQSSGGVMQSSGVTQSLRSVMQSSGGVMQSSGVTQSSGGVTWSLRSVMQSSGCMMQSPGGVMLSAGDMMQSSGGATRSLRSMMQSSGCMMQSPGGVTQSSGSVMQSLRNVIQSSGGVTQSSGGVIQSSSGVPQSLRDRMQSPGSVSQSSGDVIQSPRGASPASGDVIKSQGGMPRSLRDRMQSPGGVPQSSEDVIQSAGGVSPASGDAIQSPGGVSPASGDAMQSSGGVTPSLGDVPQSSGGVSPASGDAMQSPGGVTPSLGDAMQSPGGVSPASGDAMQSPGGVSPSLGDVPQSPGNMLESLGNTPNLSGDVSHVPQELLDLAKGRPKLSLNAVQNRHSPMTISAPSSPSCSANPLSQQSEFSSEKRPWLTVSNSSAREERSLPQSATPGSAQIQGQIAQAGVYNRPCLHRLKYFLRPPVHHLFFQTLIPDKDTRESKGQKLEPIPHRRLRMVTNTIEENFPLGTVQFLMDFVSPQHYPPREIVAHIIQKILLSGSETVDVLKEAYMLLMKIQQLHPANAKTVEWDWKLLTYVMEEEGQTLPGRVLFLRYVVQTLEDDFQQILRRQRQHLQQSIANTVLSCDKQPHNVRDVIKWLVKAVTENALTPPQDETQTSPGPGVLKTSSDHLSPQPNLARNTNQLIVCQLQRMLSIAVEVDRTPTCSSNKIAEMMFGFVLDIPERSQREMFFTTMESHLLRCKVLEIIFLHSCETPTRLPLSLAQALYFLNNSTSLLKCQSDKSQWQTWDELVEHLQFLLSSYQHVLREHLRSSVIDRKDLIIKRIKPKPQQGDDITVVDVEKQIEAFRSRLVHILGEPLVPQLQDKVHLLKLLLFYAADLNPDTEPASER.

The interval 1 to 35 is disordered; that stretch reads MEDFIVISDDSGSESSAGTRSGRARRLRRALSRTP. Residues 22 to 31 are compositionally biased toward basic residues; that stretch reads GRARRLRRAL. The short motif at 45-49 is the SUMO interaction motif 1 (SIM); mediates the binding to polysumoylated substrates element; sequence FIDLT. The SUMO interaction motif 2 (SIM); mediates the binding to polysumoylated substrates signature appears at 64–68; sequence VIDLT. Composition is skewed to low complexity over residues 183 to 197 and 532 to 553; these read SPFSSTSNNSSSSSN and SSGGVTQSSGGVIQSSSGVPQS. Disordered regions lie at residues 183-206, 532-732, 756-812, and 1024-1052; these read SPFSSTSNNSSSSSNQRTSLPCPQ, SSGG…SGDV, NRHS…PGSA, and LTPPQDETQTSPGPGVLKTSSDHLSPQPN. Polar residues predominate over residues 560-571; that stretch reads SPGSVSQSSGDV. Residues 764–777 are compositionally biased toward low complexity; sequence SAPSSPSCSANPLS. The segment at 779–1266 is interaction with SLF2; the sequence is QSEFSSEKRP…NPDTEPASER (488 aa). Positions 857–1266 are required for inhibition of CAPN3 protease activity; it reads SKGQKLEPIP…NPDTEPASER (410 aa). Residues 865–1200 are NSE5-like domain; it reads IPHRRLRMVT…IDRKDLIIKR (336 aa).

In terms of assembly, forms a heterodimer with SLF2. Interacts (via SIM domains) with SUMO1 and SUMO2. Interacts with CAPN3 and CTBP1. Interacts with SMC6 and ZNF451.

It localises to the nucleus. The protein localises to the PML body. Functionally, inhibits the protease activity of CAPN3. May play a role in SMC5-SMC6 complex recruitment for viral restriction. Forms a complex with SLF2 and this complex is required to recruit SMC5-SMC6 complex to PML nuclear bodies and sites of viral replication. This chain is SUMO-interacting motif-containing protein 1 (Simc1), found in Rattus norvegicus (Rat).